The following is a 775-amino-acid chain: Tyrosine-protein phosphatase non-receptor type 12 (775 aa).

Met1 carries the post-translational modification N-acetylmethionine. Position 19 is a phosphoserine (Ser19). Positions 28–293 (FARDFMRLRR…ELVHRAIAQL (266 aa)) constitute a Tyrosine-protein phosphatase domain. Substrate-binding positions include Asp199, 231–237 (CSAGCGR), and Gln278. Cys231 serves as the catalytic Phosphocysteine intermediate. Residues 322–341 (SSIDSEKQDSPPPKPPRTRS) form a disordered region. A phosphoserine mark is found at Ser331, Ser434, Ser448, and Ser467. The segment at 344–437 (VEGDAKEEIL…KLERNLSFEI (94 aa)) is interaction with TGFB1I1. Residues 462-775 (KIKSASSSVV…GPREPPSEWT (314 aa)) form a disordered region. Thr519 carries the post-translational modification Phosphothreonine. 2 positions are modified to phosphoserine: Ser550 and Ser567. Over residues 558 to 573 (NHSQTLKTVSSTPNST) the composition is skewed to polar residues. Thr569 is modified (phosphothreonine). Ser596 is modified (phosphoserine). Thr598 is subject to Phosphothreonine. 4 positions are modified to phosphoserine: Ser603, Ser606, Ser608, and Ser613. A compositionally biased stretch (low complexity) spans 622-640 (TSISTASATVSPASSAESA). Ser673 is modified (phosphoserine). The segment covering 692–711 (VRPEWHELPNQEWSEQRESE) has biased composition (basic and acidic residues). Ser748 is subject to Phosphoserine. The segment covering 766 to 775 (GPREPPSEWT) has biased composition (basic and acidic residues).

This sequence belongs to the protein-tyrosine phosphatase family. Non-receptor class 4 subfamily. Interacts with PSTPIP1 and TGFB1I1. Interacts with PTK2B/PYK2. Interacts with LPXN. Interacts with SORBS2; this interaction greatly enhances WASF1 dephosphorylation and might mediate partial translocation to focal adhesion sites. Post-translationally, phosphorylated by STK24/MST3 and this results in inhibition of its activity.

It localises to the cytoplasm. The protein localises to the cell junction. It is found in the focal adhesion. Its subcellular location is the cell projection. The protein resides in the podosome. The enzyme catalyses O-phospho-L-tyrosyl-[protein] + H2O = L-tyrosyl-[protein] + phosphate. Dephosphorylates a range of proteins, and thereby regulates cellular signaling cascades. Dephosphorylates cellular tyrosine kinases, such as ERBB2 and PTK2B/PYK2, and thereby regulates signaling via ERBB2 and PTK2B/PYK2. Selectively dephosphorylates ERBB2 phosphorylated at 'Tyr-1112', 'Tyr-1196', and/or 'Tyr-1248'. This Mus musculus (Mouse) protein is Tyrosine-protein phosphatase non-receptor type 12 (Ptpn12).